The following is a 121-amino-acid chain: Large ribosomal subunit protein bL12 (121 aa).

Belongs to the bacterial ribosomal protein bL12 family. In terms of assembly, homodimer. Part of the ribosomal stalk of the 50S ribosomal subunit. Forms a multimeric L10(L12)X complex, where L10 forms an elongated spine to which 2 to 4 L12 dimers bind in a sequential fashion. Binds GTP-bound translation factors.

Forms part of the ribosomal stalk which helps the ribosome interact with GTP-bound translation factors. Is thus essential for accurate translation. The protein is Large ribosomal subunit protein bL12 of Shewanella piezotolerans (strain WP3 / JCM 13877).